A 733-amino-acid polypeptide reads, in one-letter code: Catalase-peroxidase 2 (733 aa).

The segment at 1-35 (MAEAETHPPIGESQTEPAESGCPMRIKPPVEGGSN) is disordered. The tryptophyl-tyrosyl-methioninium (Trp-Tyr) (with M-260) cross-link spans 106–234 (WHAAGTYRVE…PXXPHMGLIY (129 aa)). His107 functions as the Proton acceptor in the catalytic mechanism. Positions 234 to 260 (YVNPEGPEGNPDYLAAAIDIRETFGRM) form a cross-link, tryptophyl-tyrosyl-methioninium (Tyr-Met) (with W-106). His275 lines the heme pocket.

Belongs to the peroxidase family. Peroxidase/catalase subfamily. As to quaternary structure, homodimer or homotetramer. Requires heme b as cofactor. In terms of processing, formation of the three residue Trp-Tyr-Met cross-link is important for the catalase, but not the peroxidase activity of the enzyme.

The catalysed reaction is H2O2 + AH2 = A + 2 H2O. The enzyme catalyses 2 H2O2 = O2 + 2 H2O. Its function is as follows. Bifunctional enzyme with both catalase and broad-spectrum peroxidase activity. May play a role in the intracellular survival of mycobacteria. This is Catalase-peroxidase 2 from Mycolicibacterium fortuitum (Mycobacterium fortuitum).